The following is a 187-amino-acid chain: Lipoprotein signal peptidase (187 aa).

3 helical membrane passes run 12–32 (VAVFACIAIAAIAIDQLTKMW), 68–88 (MTWLISLLAMAACVALVVLAV), and 91–111 (ISMKWTVLFAFAFAGAFGNLI). Catalysis depends on residues Asp-127 and Asp-140. Residues 141–161 (IFLMLAGVAAVLLLFLGEPFS) traverse the membrane as a helical segment. A disordered region spans residues 167 to 187 (EANGKTLGDDANATDDGAKAA).

The protein belongs to the peptidase A8 family.

The protein localises to the cell membrane. It catalyses the reaction Release of signal peptides from bacterial membrane prolipoproteins. Hydrolyzes -Xaa-Yaa-Zaa-|-(S,diacylglyceryl)Cys-, in which Xaa is hydrophobic (preferably Leu), and Yaa (Ala or Ser) and Zaa (Gly or Ala) have small, neutral side chains.. It functions in the pathway protein modification; lipoprotein biosynthesis (signal peptide cleavage). Functionally, this protein specifically catalyzes the removal of signal peptides from prolipoproteins. The protein is Lipoprotein signal peptidase of Bifidobacterium adolescentis (strain ATCC 15703 / DSM 20083 / NCTC 11814 / E194a).